Consider the following 72-residue polypeptide: Translation initiation factor IF-1 (72 aa).

The S1-like domain maps to 1–72; sequence MSKDDVIEVE…TRGRIIYRHK (72 aa).

Belongs to the IF-1 family. In terms of assembly, component of the 30S ribosomal translation pre-initiation complex which assembles on the 30S ribosome in the order IF-2 and IF-3, IF-1 and N-formylmethionyl-tRNA(fMet); mRNA recruitment can occur at any time during PIC assembly.

Its subcellular location is the cytoplasm. Its function is as follows. One of the essential components for the initiation of protein synthesis. Stabilizes the binding of IF-2 and IF-3 on the 30S subunit to which N-formylmethionyl-tRNA(fMet) subsequently binds. Helps modulate mRNA selection, yielding the 30S pre-initiation complex (PIC). Upon addition of the 50S ribosomal subunit IF-1, IF-2 and IF-3 are released leaving the mature 70S translation initiation complex. This is Translation initiation factor IF-1 from Carboxydothermus hydrogenoformans (strain ATCC BAA-161 / DSM 6008 / Z-2901).